The following is a 260-amino-acid chain: 3'-5' ssDNA/RNA exonuclease TatD (260 aa).

Residues Glu-92, His-128, and His-153 each contribute to the a divalent metal cation site.

It belongs to the metallo-dependent hydrolases superfamily. TatD-type hydrolase family. TatD subfamily. In terms of assembly, monomer. Mg(2+) serves as cofactor.

It is found in the cytoplasm. In terms of biological role, 3'-5' exonuclease that prefers single-stranded DNA and RNA. May play a role in the H(2)O(2)-induced DNA damage repair. In Yersinia pseudotuberculosis serotype O:3 (strain YPIII), this protein is 3'-5' ssDNA/RNA exonuclease TatD.